Consider the following 148-residue polypeptide: UPF0178 protein lpl0088 (148 aa).

It belongs to the UPF0178 family.

This is UPF0178 protein lpl0088 from Legionella pneumophila (strain Lens).